The chain runs to 116 residues: Flagellar transcriptional regulator FlhD (116 aa).

It belongs to the FlhD family. As to quaternary structure, homodimer; disulfide-linked. Forms a heterohexamer composed of two FlhC and four FlhD subunits. Each FlhC binds a FlhD dimer, forming a heterotrimer, and a hexamer assembles by dimerization of two heterotrimers.

It localises to the cytoplasm. Functions in complex with FlhC as a master transcriptional regulator that regulates transcription of several flagellar and non-flagellar operons by binding to their promoter region. Activates expression of class 2 flagellar genes, including fliA, which is a flagellum-specific sigma factor that turns on the class 3 genes. Also regulates genes whose products function in a variety of physiological pathways. The polypeptide is Flagellar transcriptional regulator FlhD (Salmonella arizonae (strain ATCC BAA-731 / CDC346-86 / RSK2980)).